We begin with the raw amino-acid sequence, 118 residues long: V-type proton ATPase subunit G 3 (118 aa).

Over residues 1 to 12 the composition is skewed to polar residues; it reads MASQSQGIQQLL. Positions 1 to 37 are disordered; the sequence is MASQSQGIQQLLQAEKRAKDKLEEAKKRKNKRLRQAK. Residues 3–53 adopt a coiled-coil conformation; it reads SQSQGIQQLLQAEKRAKDKLEEAKKRKNKRLRQAKEEATADIDQYRLKREG. The segment covering 14–26 has biased composition (basic and acidic residues); the sequence is AEKRAKDKLEEAK.

Belongs to the V-ATPase G subunit family. V-ATPase is a heteromultimeric enzyme made up of two complexes: the ATP-hydrolytic V1 complex and the proton translocation V0 complex. The V1 complex consists of three catalytic AB heterodimers that form a heterohexamer, three peripheral stalks each consisting of EG heterodimers, one central rotor including subunits D and F, and the regulatory subunits C and H. The proton translocation complex V0 consists of the proton transport subunit a, a ring of proteolipid subunits c9c'', rotary subunit d, subunits e and f, and two accessory subunits.

Its function is as follows. Subunit of the V1 complex of vacuolar(H+)-ATPase (V-ATPase), a multisubunit enzyme composed of a peripheral complex (V1) that hydrolyzes ATP and a membrane integral complex (V0) that translocates protons. V-ATPase is responsible for acidifying and maintaining the pH of intracellular compartments and in some cell types, is targeted to the plasma membrane, where it is responsible for acidifying the extracellular environment. The protein is V-type proton ATPase subunit G 3 (atp6v1g3) of Xenopus tropicalis (Western clawed frog).